The chain runs to 165 residues: 3-isopropylmalate dehydratase small subunit (165 aa).

This sequence belongs to the LeuD family. LeuD type 2 subfamily. As to quaternary structure, heterodimer of LeuC and LeuD.

The catalysed reaction is (2R,3S)-3-isopropylmalate = (2S)-2-isopropylmalate. It functions in the pathway amino-acid biosynthesis; L-leucine biosynthesis; L-leucine from 3-methyl-2-oxobutanoate: step 2/4. Its function is as follows. Catalyzes the isomerization between 2-isopropylmalate and 3-isopropylmalate, via the formation of 2-isopropylmaleate. The sequence is that of 3-isopropylmalate dehydratase small subunit from Saccharolobus islandicus (strain M.16.27) (Sulfolobus islandicus).